We begin with the raw amino-acid sequence, 105 residues long: Large ribosomal subunit protein bL21 (105 aa).

It belongs to the bacterial ribosomal protein bL21 family. Part of the 50S ribosomal subunit. Contacts protein L20.

Its function is as follows. This protein binds to 23S rRNA in the presence of protein L20. This Rickettsia typhi (strain ATCC VR-144 / Wilmington) protein is Large ribosomal subunit protein bL21.